A 155-amino-acid polypeptide reads, in one-letter code: Endoribonuclease YbeY (155 aa).

Histidine 114, histidine 118, and histidine 124 together coordinate Zn(2+).

Belongs to the endoribonuclease YbeY family. The cofactor is Zn(2+).

It localises to the cytoplasm. In terms of biological role, single strand-specific metallo-endoribonuclease involved in late-stage 70S ribosome quality control and in maturation of the 3' terminus of the 16S rRNA. The sequence is that of Endoribonuclease YbeY from Escherichia coli O7:K1 (strain IAI39 / ExPEC).